A 407-amino-acid polypeptide reads, in one-letter code: E3 ubiquitin-protein ligase TRIM13 (407 aa).

An RING-type zinc finger spans residues 10-58 (CPICCSLFDDPRVLPCSHNFCKKCLEGILEGSVRNSLWRPAPFKCPTCR). The B box-type zinc-finger motif lies at 89 to 131 (PKMPVCKGHLGQPLNIFCLTDMQLICGICATRGEHTKHVFCSI). Residues Cys-94, His-97, Cys-117, and His-123 each coordinate Zn(2+). Residues 172–200 (LQLLTKDSDKVKEFFEKLQHTLDQKKNEI) are a coiled coil. Residues 317–337 (LFLLILLLGLVIVFGPTMFLE) traverse the membrane as a helical segment.

This sequence belongs to the TRIM/RBCC family. As to quaternary structure, interacts (via C-terminal domain) with VCP. Interacts with AKT1; the interaction ubiquitinates AKT1 and leads to its proteasomal degradation. Interacts with MDM2; the interaction ubiquitinates AKT1 and leads to its proteasomal degradation. Interacts with p62/SQSTM1. Interacts with TRAF6. Interacts with IKBKG/NEMO. Auto-ubiquitinated; requires the RING-type zinc finger. Auto-polyubiquitination leads to proteasomal degradation.

The protein localises to the endoplasmic reticulum membrane. The enzyme catalyses S-ubiquitinyl-[E2 ubiquitin-conjugating enzyme]-L-cysteine + [acceptor protein]-L-lysine = [E2 ubiquitin-conjugating enzyme]-L-cysteine + N(6)-ubiquitinyl-[acceptor protein]-L-lysine.. The protein operates within protein modification; protein ubiquitination. Its function is as follows. Endoplasmic reticulum (ER) membrane anchored E3 ligase involved in the retrotranslocation and turnover of membrane and secretory proteins from the ER through a set of processes named ER-associated degradation (ERAD). This process acts on misfolded proteins as well as in the regulated degradation of correctly folded proteins. Enhances ionizing radiation-induced p53/TP53 stability and apoptosis via ubiquitinating MDM2 and AKT1 and decreasing AKT1 kinase activity through MDM2 and AKT1 proteasomal degradation. Regulates ER stress-induced autophagy, and may act as a tumor suppressor. Also plays a role in innate immune response by stimulating NF-kappa-B activity in the TLR2 signaling pathway. Ubiquitinates TRAF6 via the 'Lys-29'-linked polyubiquitination chain resulting in NF-kappa-B activation. Participates as well in T-cell receptor-mediated NF-kappa-B activation. In the presence of TNF, modulates the IKK complex by regulating IKBKG/NEMO ubiquitination leading to the repression of NF-kappa-B. The protein is E3 ubiquitin-protein ligase TRIM13 (TRIM13) of Homo sapiens (Human).